Consider the following 278-residue polypeptide: Large ribosomal subunit protein uL2 (278 aa).

The tract at residues 222-264 (RGVAMNPVDHPHGGGEGRTSGGRNPVTPWGVPTKGKKTRSNKR) is disordered.

Belongs to the universal ribosomal protein uL2 family. In terms of assembly, part of the 50S ribosomal subunit. Forms a bridge to the 30S subunit in the 70S ribosome.

Its function is as follows. One of the primary rRNA binding proteins. Required for association of the 30S and 50S subunits to form the 70S ribosome, for tRNA binding and peptide bond formation. It has been suggested to have peptidyltransferase activity; this is somewhat controversial. Makes several contacts with the 16S rRNA in the 70S ribosome. The chain is Large ribosomal subunit protein uL2 from Methylobacterium radiotolerans (strain ATCC 27329 / DSM 1819 / JCM 2831 / NBRC 15690 / NCIMB 10815 / 0-1).